The sequence spans 87 residues: DNA-directed RNA polymerase subunit omega (87 aa).

This sequence belongs to the RNA polymerase subunit omega family. As to quaternary structure, the RNAP catalytic core consists of 2 alpha, 1 beta, 1 beta' and 1 omega subunit. When a sigma factor is associated with the core the holoenzyme is formed, which can initiate transcription.

The catalysed reaction is RNA(n) + a ribonucleoside 5'-triphosphate = RNA(n+1) + diphosphate. In terms of biological role, promotes RNA polymerase assembly. Latches the N- and C-terminal regions of the beta' subunit thereby facilitating its interaction with the beta and alpha subunits. In Thioalkalivibrio sulfidiphilus (strain HL-EbGR7), this protein is DNA-directed RNA polymerase subunit omega.